A 216-amino-acid polypeptide reads, in one-letter code: Small ribosomal subunit protein uS3c (216 aa).

The KH type-2 domain occupies 43-116 (IKNYVQKNMR…RLNIAITRVA (74 aa)).

It belongs to the universal ribosomal protein uS3 family. As to quaternary structure, part of the 30S ribosomal subunit.

The protein localises to the plastid. The protein resides in the chloroplast. The protein is Small ribosomal subunit protein uS3c (rps3) of Drimys granadensis.